Consider the following 308-residue polypeptide: Microtubule integrity protein mal3 (308 aa).

Residues 2–103 (SESRQELLAW…FVQWAKRFWD (102 aa)) enclose the Calponin-homology (CH) domain. Residues 117-162 (RGNRGPANTRVMNSSAGATGPSRRRQVSSGSSTPSMTKSSANNNNV) are disordered. Low complexity predominate over residues 144-162 (SSGSSTPSMTKSSANNNNV). The region spanning 173 to 247 (RAKQAQQQIT…LYSTEDGFEL (75 aa)) is the EB1 C-terminal domain.

It belongs to the MAPRE family. In terms of assembly, interacts with tea2.

It localises to the cytoplasm. It is found in the cytoskeleton. Its function is as follows. May play a role in regulating the integrity of microtubules possibly by influencing their stability. Involved in an anchoring mechanism to maintain tea2 and tip1 at growing microtubule ends. Strongly stimulates the ATPase activity of tea2. This Schizosaccharomyces pombe (strain 972 / ATCC 24843) (Fission yeast) protein is Microtubule integrity protein mal3 (mal3).